The sequence spans 470 residues: Acetyl-CoA decarbonylase/synthase complex subunit gamma 2 (470 aa).

One can recognise a 4Fe-4S domain in the interval 1–60 (MKINSPLEAYKYLPQTNCGECGQPTCMAFASTLIDRSGKTTDCPPLIKEKKFAKKLAELD). Cysteine 18, cysteine 21, cysteine 26, and cysteine 43 together coordinate [4Fe-4S] cluster.

Heterodimer of delta and gamma chains. The ACDS complex is made up of alpha, epsilon, beta, gamma and delta chains with a probable stoichiometry of (alpha(2)epsilon(2))(4)-beta(8)-(gamma(1)delta(1))(8). Corrinoid is required as a cofactor. [4Fe-4S] cluster serves as cofactor.

It carries out the reaction 5,6,7,8-tetrahydrosarcinapterin + methyl-Co(III)-[corrinoid Fe-S protein] = 5-methyltetrahydrosarcinapterin + Co(I)-[corrinoid Fe-S protein] + H(+). It functions in the pathway one-carbon metabolism; methanogenesis from acetate. Functionally, part of a complex that catalyzes the reversible cleavage of acetyl-CoA, allowing growth on acetate as sole source of carbon and energy. This is Acetyl-CoA decarbonylase/synthase complex subunit gamma 2 from Methanosarcina mazei (strain ATCC BAA-159 / DSM 3647 / Goe1 / Go1 / JCM 11833 / OCM 88) (Methanosarcina frisia).